The chain runs to 154 residues: Myoglobin (154 aa).

In terms of domain architecture, Globin spans 2–148 (GLSDGEWQLV…FRKDMASNYK (147 aa)). Serine 4 is modified (phosphoserine). Residue histidine 65 participates in nitrite binding. Residue histidine 65 coordinates O2. Position 68 is a phosphothreonine (threonine 68). Histidine 94 is a heme b binding site.

The protein belongs to the globin family. Monomeric.

It localises to the cytoplasm. Its subcellular location is the sarcoplasm. It catalyses the reaction Fe(III)-heme b-[protein] + nitric oxide + H2O = Fe(II)-heme b-[protein] + nitrite + 2 H(+). The catalysed reaction is H2O2 + AH2 = A + 2 H2O. Monomeric heme protein which primary function is to store oxygen and facilitate its diffusion within muscle tissues. Reversibly binds oxygen through a pentacoordinated heme iron and enables its timely and efficient release as needed during periods of heightened demand. Depending on the oxidative conditions of tissues and cells, and in addition to its ability to bind oxygen, it also has a nitrite reductase activity whereby it regulates the production of bioactive nitric oxide. Under stress conditions, like hypoxia and anoxia, it also protects cells against reactive oxygen species thanks to its pseudoperoxidase activity. In Hylobates agilis (Agile gibbon), this protein is Myoglobin (MB).